Consider the following 403-residue polypeptide: TBC1 domain family member 20 (403 aa).

The segment at 1-25 (MALRSAQGDGPTSGHWDGGAEKADF) is disordered. Residues 60–246 (LLTDEIRRKV…RLYDFFLACH (187 aa)) form the Rab-GAP TBC domain. Helical transmembrane passes span 238 to 258 (LYDF…AVIV) and 367 to 387 (FVKL…LAVV).

(Microbial infection) Directly interacts with the N-terminal amphipathic helix of hepatitis C virus (HCV) NS5A.

It is found in the membrane. Its function is as follows. GTPase-activating protein (GAP) specific for Rab1 and Rab2 small GTPase families for which it can accelerate the intrinsic GTP hydrolysis rate by more than five orders of magnitude. Also shows GAP activity for RAB18 GTPase. Promotes RAB18 dissociation from the endoplasmic reticulum (ER) membrane into the cytosol, probably through stimulating RAB18 GTP-hydrolysis. Involved in maintaining endoplasmic reticulum structure. In Homo sapiens (Human), this protein is TBC1 domain family member 20.